Here is a 125-residue protein sequence, read N- to C-terminus: Small ribosomal subunit protein eS8 (125 aa).

The span at 1–11 (MAISQGKSTRL) shows a compositional bias: polar residues. Residues 1–38 (MAISQGKSTRLPSGARNVANRGKRKAELGRDPAETRVD) are disordered. The segment covering 25 to 38 (KAELGRDPAETRVD) has biased composition (basic and acidic residues).

The protein belongs to the eukaryotic ribosomal protein eS8 family. As to quaternary structure, part of the 30S ribosomal subunit.

The protein is Small ribosomal subunit protein eS8 of Methanobrevibacter smithii (strain ATCC 35061 / DSM 861 / OCM 144 / PS).